Consider the following 520-residue polypeptide: Probable DNA ligase (520 aa).

Glu-213 contacts ATP. Lys-215 functions as the N6-AMP-lysine intermediate in the catalytic mechanism. 6 residues coordinate ATP: Arg-220, Arg-235, Glu-264, Phe-300, Arg-372, and Lys-378.

Belongs to the ATP-dependent DNA ligase family. Mg(2+) serves as cofactor.

It catalyses the reaction ATP + (deoxyribonucleotide)n-3'-hydroxyl + 5'-phospho-(deoxyribonucleotide)m = (deoxyribonucleotide)n+m + AMP + diphosphate.. Its function is as follows. DNA ligase that seals nicks in double-stranded DNA during DNA replication, DNA recombination and DNA repair. The chain is Probable DNA ligase from Mycobacterium sp. (strain JLS).